The sequence spans 1158 residues: Formin-C (1158 aa).

3 disordered regions span residues 8-29, 417-523, and 990-1052; these read INGN…PSVS, PNTS…LSCL, and INNN…NNSQ. Positions 20-388 constitute a GBD/FH3 domain; that stretch reads QQPQQNPSVS…EYSQRKLEMI (369 aa). The span at 417–437 shows a compositional bias: polar residues; that stretch reads PNTSDLFDSSTLEDTYDGNND. Low complexity predominate over residues 438–481; the sequence is TNSCTSISTSSTPIHISQPTTLIVPSTTPNHPPQQSQQTPPLQL. Residues 479–515 are a coiled coil; it reads LQLQKEKEKEKEKEKEKEKEKEKEQQQQQQQSNKQST. Over residues 482–503 the composition is skewed to basic and acidic residues; sequence QKEKEKEKEKEKEKEKEKEKEQ. In terms of domain architecture, FH2 spans 601–998; it reads TKSPITPSKR…IINNNNNNNN (398 aa). The 25-residue stretch at 1134–1158 folds into the DAD domain; sequence SDDPMAVIIEALKTGSPNDMVKRAF.

This sequence belongs to the formin homology family. Diaphanous subfamily. As to quaternary structure, interacts (via GBD/FH3 domain) with activated Rho-GTPases.

The protein localises to the cytoplasm. The protein resides in the cytosol. Its subcellular location is the cytoskeleton. Formins play an important role in the nucleation of actin and the formation of linear actin filaments. The polypeptide is Formin-C (forC) (Dictyostelium discoideum (Social amoeba)).